Consider the following 630-residue polypeptide: Heat shock cognate 70 kDa protein 3 (630 aa).

Positions 611 to 630 (FYQGNNNPKPTTTTFNQDLD) are disordered. Residues 615–630 (NNNPKPTTTTFNQDLD) show a composition bias toward low complexity.

It belongs to the heat shock protein 70 family.

Its function is as follows. May function in protein folding and assembly, and disassembly of protein complexes. In Dictyostelium discoideum (Social amoeba), this protein is Heat shock cognate 70 kDa protein 3.